Reading from the N-terminus, the 344-residue chain is Aurora kinase B (344 aa).

T35 carries the phosphothreonine modification. Positions 46-65 are disordered; the sequence is NAQPTAAPGQKVVENSSGTP. Position 62 is a phosphoserine (S62). T64 carries the phosphothreonine modification. The 251-residue stretch at 77–327 folds into the Protein kinase domain; the sequence is FEIGRPLGKG…LAQVSAHPWV (251 aa). Residues 83–91 and K106 each bind ATP; that span reads LGKGKFGNV. D200 serves as the catalytic Proton acceptor. K215 is modified (N6-acetyllysine). S227 carries the phosphoserine modification. Residue T232 is modified to Phosphothreonine; by autocatalysis.

This sequence belongs to the protein kinase superfamily. Ser/Thr protein kinase family. Aurora subfamily. In terms of assembly, component of the chromosomal passenger complex (CPC) composed of at least BIRC5/survivin, CDCA8/borealin, INCENP, AURKB or AURKC; predominantly independent AURKB- and AURKC-containing complexes exist. Associates with RACGAP1 during M phase. Interacts with SPDYC; this interaction may be required for proper localization of active, Thr-232-phosphorylated AURKB form during prometaphase and metaphase. Interacts with p53/TP53. Interacts (via the middle kinase domain) with NOC2L (via the N- and C-terminus domains). Interacts with CDCA1. Interacts with EVI5. Interacts with JTB. Interacts with NDC80. Interacts with PSMA3. Interacts with RNF2/RING1B. Interacts with SEPTIN1. Interacts with SIRT2. Interacts with TACC1. Interacts with TTC28. In terms of processing, the phosphorylation of Thr-232 requires the binding to INCENP and occurs by means of an autophosphorylation mechanism. Thr-232 phosphorylation is indispensable for the AURKB kinase activity. Post-translationally, acetylated at Lys-215 by KAT5 at kinetochores, increasing AURKB activity and promoting accurate chromosome segregation in mitosis. Ubiquitinated by different BCR (BTB-CUL3-RBX1) E3 ubiquitin ligase complexes. Ubiquitinated by the BCR(KLHL9-KLHL13) E3 ubiquitin ligase complex, ubiquitination leads to removal from mitotic chromosomes and is required for cytokinesis. During anaphase, the BCR(KLHL21) E3 ubiquitin ligase complex recruits the CPC complex from chromosomes to the spindle midzone and mediates the ubiquitination of AURKB. Ubiquitination of AURKB by BCR(KLHL21) E3 ubiquitin ligase complex may not lead to its degradation by the proteasome. Deubiquitinated by USP35; inhibiting CDH1-mediated degradation of AURKB.

The protein resides in the nucleus. Its subcellular location is the chromosome. The protein localises to the centromere. It localises to the kinetochore. It is found in the cytoplasm. The protein resides in the cytoskeleton. Its subcellular location is the spindle. The protein localises to the midbody. It carries out the reaction L-seryl-[protein] + ATP = O-phospho-L-seryl-[protein] + ADP + H(+). The enzyme catalyses L-threonyl-[protein] + ATP = O-phospho-L-threonyl-[protein] + ADP + H(+). Activity is greatly increased when AURKB is within the CPC complex. In particular, AURKB-phosphorylated INCENP acts as an activator of AURKB. Positive feedback between HASPIN and AURKB contributes to CPC localization. Functionally, serine/threonine-protein kinase component of the chromosomal passenger complex (CPC), a complex that acts as a key regulator of mitosis. The CPC complex has essential functions at the centromere in ensuring correct chromosome alignment and segregation and is required for chromatin-induced microtubule stabilization and spindle assembly. Involved in the bipolar attachment of spindle microtubules to kinetochores and is a key regulator for the onset of cytokinesis during mitosis. Required for central/midzone spindle assembly and cleavage furrow formation. Key component of the cytokinesis checkpoint, a process required to delay abscission to prevent both premature resolution of intercellular chromosome bridges and accumulation of DNA damage: phosphorylates CHMP4C, leading to retain abscission-competent VPS4 (VPS4A and/or VPS4B) at the midbody ring until abscission checkpoint signaling is terminated at late cytokinesis. AURKB phosphorylates the CPC complex subunits BIRC5/survivin, CDCA8/borealin and INCENP. Phosphorylation of INCENP leads to increased AURKB activity. Other known AURKB substrates involved in centromeric functions and mitosis are CENPA, DES/desmin, GPAF, KIF2C, NSUN2, RACGAP1, SEPTIN1, VIM/vimentin, HASPIN, and histone H3. A positive feedback loop involving HASPIN and AURKB contributes to localization of CPC to centromeres. Phosphorylation of VIM controls vimentin filament segregation in cytokinetic process, whereas histone H3 is phosphorylated at 'Ser-10' and 'Ser-28' during mitosis (H3S10ph and H3S28ph, respectively). AURKB is also required for kinetochore localization of BUB1 and SGO1. Phosphorylation of p53/TP53 negatively regulates its transcriptional activity. Key regulator of active promoters in resting B- and T-lymphocytes: acts by mediating phosphorylation of H3S28ph at active promoters in resting B-cells, inhibiting RNF2/RING1B-mediated ubiquitination of histone H2A and enhancing binding and activity of the USP16 deubiquitinase at transcribed genes. Acts as an inhibitor of CGAS during mitosis: catalyzes phosphorylation of the N-terminus of CGAS during the G2-M transition, blocking CGAS liquid phase separation and activation, and thereby preventing CGAS-induced autoimmunity. Phosphorylates KRT5 during anaphase and telophase. Phosphorylates ATXN10 which promotes phosphorylation of ATXN10 by PLK1 and may play a role in the regulation of cytokinesis and stimulating the proteasomal degradation of ATXN10. The protein is Aurora kinase B (AURKB) of Bos taurus (Bovine).